The sequence spans 69 residues: Putative membrane protein insertion efficiency factor (69 aa).

The protein belongs to the UPF0161 family.

The protein resides in the cell membrane. Could be involved in insertion of integral membrane proteins into the membrane. This chain is Putative membrane protein insertion efficiency factor, found in Desulfitobacterium hafniense (strain Y51).